A 118-amino-acid chain; its full sequence is Large ribosomal subunit protein bL17 (118 aa).

The protein belongs to the bacterial ribosomal protein bL17 family. In terms of assembly, part of the 50S ribosomal subunit. Contacts protein L32.

This Phytoplasma mali (strain AT) protein is Large ribosomal subunit protein bL17.